The sequence spans 61 residues: Metallothionein-1E (61 aa).

The residue at position 1 (Met-1) is an N-acetylmethionine. The tract at residues 1–29 (MDPNCSCATGGSCTCAGSCKCKECKCTSC) is beta. A divalent metal cation is bound by residues Cys-5, Cys-7, Cys-13, Cys-15, Cys-19, Cys-21, Cys-24, Cys-26, Cys-29, Cys-33, Cys-34, Cys-36, Cys-37, Cys-41, Cys-44, Cys-48, Cys-50, Cys-57, Cys-59, and Cys-60. Positions 30 to 61 (KKSCCSCCPVGCAKCAQGCVCKGASEKCSCCA) are alpha.

It belongs to the metallothionein superfamily. Type 1 family. In terms of assembly, monomer.

Its function is as follows. Metallothioneins have a high content of cysteine residues that bind various heavy metals; these proteins are transcriptionally regulated by both heavy metals and glucocorticoids. In Homo sapiens (Human), this protein is Metallothionein-1E (MT1E).